The sequence spans 317 residues: Acetyl-coenzyme A carboxylase carboxyl transferase subunit alpha (317 aa).

Residues arginine 40–aspartate 294 enclose the CoA carboxyltransferase C-terminal domain.

It belongs to the AccA family. Acetyl-CoA carboxylase is a heterohexamer composed of biotin carboxyl carrier protein (AccB), biotin carboxylase (AccC) and two subunits each of ACCase subunit alpha (AccA) and ACCase subunit beta (AccD).

The protein localises to the cytoplasm. It carries out the reaction N(6)-carboxybiotinyl-L-lysyl-[protein] + acetyl-CoA = N(6)-biotinyl-L-lysyl-[protein] + malonyl-CoA. It participates in lipid metabolism; malonyl-CoA biosynthesis; malonyl-CoA from acetyl-CoA: step 1/1. In terms of biological role, component of the acetyl coenzyme A carboxylase (ACC) complex. First, biotin carboxylase catalyzes the carboxylation of biotin on its carrier protein (BCCP) and then the CO(2) group is transferred by the carboxyltransferase to acetyl-CoA to form malonyl-CoA. This is Acetyl-coenzyme A carboxylase carboxyl transferase subunit alpha from Actinobacillus succinogenes (strain ATCC 55618 / DSM 22257 / CCUG 43843 / 130Z).